The primary structure comprises 353 residues: Melanin-concentrating hormone receptor 1 (353 aa).

Positions 1–28 (MDLEASLLPTGPNASNTSDGPDNLTSAG) are disordered. Topologically, residues 1–45 (MDLEASLLPTGPNASNTSDGPDNLTSAGPPPRTGSISYVNIIMPS) are extracellular. Positions 12 to 26 (PNASNTSDGPDNLTS) are enriched in polar residues. N-linked (GlcNAc...) asparagine glycosylation is found at asparagine 13, asparagine 16, and asparagine 23. The helical transmembrane segment at 46–66 (VFGTICLLGIIGNSMVIFAVV) threads the bilayer. Residues 67–79 (KKSKLHWFSNVPD) lie on the Cytoplasmic side of the membrane. The helical transmembrane segment at 80-100 (IFIINLSVVDLLFLLGMPFMI) threads the bilayer. Residues 101–116 (HQLMGNGVWHFGETMC) lie on the Extracellular side of the membrane. Cysteine 116 and cysteine 194 form a disulfide bridge. A helical transmembrane segment spans residues 117-139 (TLITAMDANSQFTSTYILTAMAI). At 140 to 161 (DRYLATVHPISSTRFRKPSVAT) the chain is on the cytoplasmic side. The helical transmembrane segment at 162–182 (LVICLLWALSIISITPVWLYA) threads the bilayer. Over 183–204 (RLIPFPGGTVGCGIRLPNPDTD) the chain is Extracellular. The chain crosses the membrane as a helical span at residues 205 to 225 (LYWFTLYQFFLAFALPFVVIT). The Cytoplasmic portion of the chain corresponds to 226–256 (AAYVRILQRMTSSVAPASQRSIRLRTKRVTR). The chain crosses the membrane as a helical span at residues 257 to 277 (TAIAICLVFFVCWAPYYVLQL). At 278-294 (TQLSISRPTLTFVYLYN) the chain is on the extracellular side. A helical membrane pass occupies residues 295–315 (AAISLGYANSCLNPFVYIVLC). Topologically, residues 316–353 (ETFRKRLVLSVKPAAQGQLRAVSNAQTAEEERTESKGT) are cytoplasmic.

This sequence belongs to the G-protein coupled receptor 1 family. As to quaternary structure, interacts with NCDN.

It localises to the cell membrane. Receptor for melanin-concentrating hormone, coupled to both G proteins that inhibit adenylyl cyclase and G proteins that activate phosphoinositide hydrolysis. This chain is Melanin-concentrating hormone receptor 1, found in Sus scrofa (Pig).